The chain runs to 185 residues: Ribosome-recycling factor (185 aa).

It belongs to the RRF family.

It localises to the cytoplasm. In terms of biological role, responsible for the release of ribosomes from messenger RNA at the termination of protein biosynthesis. May increase the efficiency of translation by recycling ribosomes from one round of translation to another. The sequence is that of Ribosome-recycling factor from Zymomonas mobilis subsp. mobilis (strain ATCC 31821 / ZM4 / CP4).